The primary structure comprises 501 residues: Circadian clock oscillator protein KaiC (501 aa).

KaiC domains lie at 1–232 (MQVQ…ITVF) and 246–501 (IRIS…REKK). ATP is bound by residues Gly-34, Thr-35, Gly-36, Lys-37, Thr-38, Ser-74, Lys-209, Leu-210, Arg-211, Thr-213, His-215, Thr-275, Gly-276, Thr-277, Gly-278, Lys-279, and Thr-280. Thr-38 provides a ligand contact to Mg(2+). Residues Thr-280 and Glu-303 each coordinate Mg(2+). Trp-316 serves as a coordination point for ATP. A Phosphoserine; by autocatalysis modification is found at Ser-416. Residue Thr-417 is modified to Phosphothreonine; by autocatalysis. Residues Arg-436, Lys-442, Met-443, Arg-444, Ser-446, His-448, and Lys-450 each coordinate ATP.

The protein belongs to the KaiC family. As to quaternary structure, homohexamer; hexamerization is dependent on ATP-binding. Component of the KaiBC complex. KaiC interacts with SasA, activating its autokinase function and leading to RpaA activation. The cofactor is Mg(2+). Phosphorylated on serine and threonine residues by autocatalysis. Has a 4 step phosphorylation cycle; the autokinase acts first on Thr-417, then Ser-416. When Ser-416 is modified KaiC switches to an autophosphatase mode, acting first on phospho-Thr-417 then phospho-Ser-416.

It carries out the reaction L-seryl-[protein] + ATP = O-phospho-L-seryl-[protein] + ADP + H(+). It catalyses the reaction L-threonyl-[protein] + ATP = O-phospho-L-threonyl-[protein] + ADP + H(+). The enzyme catalyses ATP + H2O = ADP + phosphate + H(+). In terms of biological role, central component of the KaiBC oscillator complex, which constitutes the main circadian regulator in cyanobacteria. Its composition changes during the circadian cycle to control KaiC phosphorylation. Autophosphorylates and has a weak ATPase activity; ATPase activity defines the circadian period. The chain is Circadian clock oscillator protein KaiC from Prochlorococcus marinus (strain SARG / CCMP1375 / SS120).